The primary structure comprises 269 residues: Interleukin-1 beta (269 aa).

Positions 1–117 (MATVPELNCE…DDDDNLLVCD (117 aa)) are excised as a propeptide.

This sequence belongs to the IL-1 family. In terms of assembly, monomer. Interacts with MEFV. Interacts with integrins ITGAV:ITGBV and ITGA5:ITGB1; integrin-binding is required for IL1B signaling. Interacts with cargo receptor TMED10; the interaction is direct and is required for the secretion of IL1B mature form. Interacts with HSP90AB1; the interaction facilitates cargo translocation into the ERGIC. Interacts with HSP90B1; the interaction facilitates cargo translocation into the ERGIC. In terms of tissue distribution, expressed in activated macrophages (at protein level).

It localises to the cytoplasm. The protein localises to the cytosol. It is found in the secreted. Its subcellular location is the lysosome. The protein resides in the extracellular exosome. Potent pro-inflammatory cytokine. Initially discovered as the major endogenous pyrogen, induces prostaglandin synthesis, neutrophil influx and activation, T-cell activation and cytokine production, B-cell activation and antibody production, and fibroblast proliferation and collagen production. Promotes Th17 differentiation of T-cells. Synergizes with IL12/interleukin-12 to induce IFNG synthesis from T-helper 1 (Th1) cells. Plays a role in angiogenesis by inducing VEGF production synergistically with TNF and IL6. Involved in transduction of inflammation downstream of pyroptosis: its mature form is specifically released in the extracellular milieu by passing through the gasdermin-D (GSDMD) pore. The protein is Interleukin-1 beta (Il1b) of Mus musculus (Mouse).